The primary structure comprises 285 residues: Hydroxyacylglutathione hydrolase, mitochondrial (285 aa).

A mitochondrion-targeting transit peptide spans Met1 to Asn10. Zn(2+) contacts are provided by His69, His71, Asp73, His74, His131, Asp154, and His198.

Zn(2+) serves as cofactor.

It localises to the mitochondrion matrix. The catalysed reaction is an S-(2-hydroxyacyl)glutathione + H2O = a 2-hydroxy carboxylate + glutathione + H(+). It catalyses the reaction (R)-S-lactoylglutathione + H2O = (R)-lactate + glutathione + H(+). Its pathway is secondary metabolite metabolism; methylglyoxal degradation; (R)-lactate from methylglyoxal: step 2/2. Inhibited by various thiol compounds such as glutathione and coenzyme A. Thiolesterase that catalyzes the hydrolysis of S-D-lactoylglutathione to form glutathione and D-lactic acid. Involved in the metabolism of methylglyoxal, a toxic compound for yeast proliferation, by converting methylglyoxal to lactate via S-D-lactoylglutathione by sequential enzyme reactions catalyzed by glyoxalase I and glyoxalase II. The sequence is that of Hydroxyacylglutathione hydrolase, mitochondrial from Saccharomyces cerevisiae (strain ATCC 204508 / S288c) (Baker's yeast).